The chain runs to 123 residues: Secreted RxLR effector protein RXLR-C21 (123 aa).

The N-terminal stretch at 1-23 (MRLHLLVLSVIVVSLLVSDNAHA) is a signal peptide. Residues 32–65 (RALRETPINGLVTNQLAVSRNLTPAKFITNSEER) carry the RxLR-dEER motif. Residues 101-121 (VTTICSIVLFVMVFGCLYKIF) form a helical membrane-spanning segment.

Belongs to the RxLR effector family.

The protein localises to the secreted. The protein resides in the host endoplasmic reticulum membrane. In terms of biological role, secreted effector that does not suppress pattern-triggered immunity (PTI) in plant host. This Plasmopara halstedii (Downy mildew of sunflower) protein is Secreted RxLR effector protein RXLR-C21.